The chain runs to 321 residues: Tetraketide alpha-pyrone reductase 2 (321 aa).

Residue serine 2 is modified to N-acetylserine. NADP(+)-binding positions include 4 to 28, lysine 40, and tyrosine 160; that span reads YLVT…GHTV.

Belongs to the NAD(P)-dependent epimerase/dehydratase family. Dihydroflavonol-4-reductase subfamily.

The protein resides in the cytoplasm. Its function is as follows. May be involved in the biosynthesis of hydroxylated tetraketide compounds that serve as sporopollenin precursors (the main constituents of exine). Acts on tetraketide alpha-pyrones and reduces the carbonyl function on the tetraketide alkyl chain to a secondary alcohol function. The protein is Tetraketide alpha-pyrone reductase 2 (TKPR2) of Arabidopsis thaliana (Mouse-ear cress).